Consider the following 889-residue polypeptide: Translation initiation factor IF-2 (889 aa).

The segment at 158 to 296 (LKEKQEKRRQ…KYKSDELQSQ (139 aa)) is disordered. Positions 209-228 (AAATPATSTAPATTSTTAAT) are enriched in low complexity. Positions 238-270 (VKPEEKGEKKKKPTKQDAWKDEPVKRREPKARG) are enriched in basic and acidic residues. The tr-type G domain occupies 391 to 560 (PRAPVVTVMG…LLQAEVLELK (170 aa)). The interval 400–407 (GHVDHGKT) is G1. 400–407 (GHVDHGKT) is a binding site for GTP. The segment at 425–429 (GITQH) is G2. A G3 region spans residues 446-449 (DTPG). Residues 446-450 (DTPGH) and 500-503 (NKMD) each bind GTP. A G4 region spans residues 500 to 503 (NKMD). A G5 region spans residues 536–538 (SAK).

It belongs to the TRAFAC class translation factor GTPase superfamily. Classic translation factor GTPase family. IF-2 subfamily.

It localises to the cytoplasm. One of the essential components for the initiation of protein synthesis. Protects formylmethionyl-tRNA from spontaneous hydrolysis and promotes its binding to the 30S ribosomal subunits. Also involved in the hydrolysis of GTP during the formation of the 70S ribosomal complex. This is Translation initiation factor IF-2 from Nitrosomonas europaea (strain ATCC 19718 / CIP 103999 / KCTC 2705 / NBRC 14298).